The chain runs to 101 residues: Rho GTPase-activating protein 39 (101 aa).

Positions 1 to 96 (YEQCIAHYES…VLIQHLDTSF (96 aa)) constitute a Rho-GAP domain.

In terms of tissue distribution, preoptic area and testis.

This chain is Rho GTPase-activating protein 39 (Arhgap39), found in Rattus norvegicus (Rat).